Reading from the N-terminus, the 541-residue chain is 2-succinyl-5-enolpyruvyl-6-hydroxy-3-cyclohexene-1-carboxylate synthase (541 aa).

This sequence belongs to the TPP enzyme family. MenD subfamily. As to quaternary structure, homodimer. Requires Mg(2+) as cofactor. It depends on Mn(2+) as a cofactor. The cofactor is thiamine diphosphate.

It catalyses the reaction isochorismate + 2-oxoglutarate + H(+) = 5-enolpyruvoyl-6-hydroxy-2-succinyl-cyclohex-3-ene-1-carboxylate + CO2. Its pathway is quinol/quinone metabolism; 1,4-dihydroxy-2-naphthoate biosynthesis; 1,4-dihydroxy-2-naphthoate from chorismate: step 2/7. It functions in the pathway quinol/quinone metabolism; menaquinone biosynthesis. Functionally, catalyzes the thiamine diphosphate-dependent decarboxylation of 2-oxoglutarate and the subsequent addition of the resulting succinic semialdehyde-thiamine pyrophosphate anion to isochorismate to yield 2-succinyl-5-enolpyruvyl-6-hydroxy-3-cyclohexene-1-carboxylate (SEPHCHC). This Rhodococcus jostii (strain RHA1) protein is 2-succinyl-5-enolpyruvyl-6-hydroxy-3-cyclohexene-1-carboxylate synthase.